We begin with the raw amino-acid sequence, 469 residues long: UDP-N-acetylmuramate--L-alanine ligase (469 aa).

122 to 128 is a binding site for ATP; sequence GTHGKTT.

It belongs to the MurCDEF family.

The protein localises to the cytoplasm. The enzyme catalyses UDP-N-acetyl-alpha-D-muramate + L-alanine + ATP = UDP-N-acetyl-alpha-D-muramoyl-L-alanine + ADP + phosphate + H(+). It functions in the pathway cell wall biogenesis; peptidoglycan biosynthesis. Cell wall formation. The sequence is that of UDP-N-acetylmuramate--L-alanine ligase from Legionella pneumophila (strain Lens).